An 845-amino-acid chain; its full sequence is MSKFDVEQLLSELNQDEKISLLSAVDFWHTKKIERLGIPAVRVSDGPNGIRGTKFFDGVPSGCFPNGTGLASTFDRDLLETAGKLMAKESIAKNAAVILGPTTNMQRGPLGGRGFESFSEDPYLAGMATSSVVKGMQGEGIAATVKHFVCNDLEDQRFSSNSIVSERALREIYLEPFRLAVKHANPVCIMTAYNKVNGDHCSQSKKLLIDILRDEWKWDGMLMSDWFGTYTTAAAIKNGLDIEFPGPTRWRTRALVSHSLNSREQITTEDVDDRVRQVLKMIKFVVDNLEKTGIVENGPESTSNNTKETSDLLREIAADSIVLLKNKNNYLTSKERRQYHVIGPNAKAKTSSGGGSASMNSYYVVSPYEGIVNKLGKEVDYTVGAYSHKSIGGLAESSLIDAAKPADAENAGLIAKFYSNPVEERSEDEEPFHVTKVNRSNVHLFDFKHEKVDPKNPYFFVTLTGQYVPQEDGDYIFSLQVYGSGLFYLNDELIIDQKHNQERGSFCFGAGTKERTKKLTLKKGQVYNVRVEYGSGPTSGLVGEFGAGGFQAGVIKAIDDDEEIRNAAELAAKHDKAVLIIGLNGEWETEGYDRENMDLPKRTNELVRAVLKANPNTVIVNQSGTPVEFPWLEEANALVQAWYGGNELGNAIADVLYGDVVPNGKLSLSWPFKLQDNPAFLNFKTEFGRVVYGEDIFVGYRYYEKLQRKVAFPFGYGLSYTTFELDISDFKVTDDKIDISVDVKNTGDKFAGSEVVQVYFSALNSKVSRPVKELKGFEKVHLEPGEKKTVNIELELKDAISYFNEELGKWHVEAGEYLVSVGTSSDDILSVKEFKVEKDLYWKGL.

The N-linked (GlcNAc...) asparagine glycan is linked to Asn-66. The active site involves Asp-225. Asn-304, Asn-438, and Asn-621 each carry an N-linked (GlcNAc...) asparagine glycan. Residues 408–568 (AENAGLIAKF…DDDEEIRNAA (161 aa)) enclose the PA14 domain.

This sequence belongs to the glycosyl hydrolase 3 family. As to quaternary structure, homotetramer.

The enzyme catalyses Hydrolysis of terminal, non-reducing beta-D-glucosyl residues with release of beta-D-glucose.. The protein operates within glycan metabolism; cellulose degradation. The sequence is that of Beta-glucosidase from Kluyveromyces marxianus (Yeast).